The primary structure comprises 217 residues: MRIFSETEIRIIGCLIEKEITTPEQYPLTLNALTTACNQKSNRDPVTSLTDSDVLDSVNALIQERIITDETRGNSRVAKYQHRFCNTEFGSLKLSKQELAVLCVLFLRGPQTPGELRTRTQRLCEFDNVAQVENVLNGLSADEHSPKVIKLAKEPGKREARFAHLFCGEVSQATATVQQAPSESHDNERIVALESDVADLKLEVEELKKLINNLLDK.

It belongs to the UPF0502 family.

This Aliivibrio fischeri (strain MJ11) (Vibrio fischeri) protein is UPF0502 protein VFMJ11_A0613.